Consider the following 274-residue polypeptide: Large ribosomal subunit protein uL2cz/uL2cy (274 aa).

The segment covering 1 to 15 (MAINLYKTSTPSTRN) has biased composition (polar residues). Disordered regions lie at residues 1–22 (MAINLYKTSTPSTRNGAVDSQV) and 225–274 (PVDH…RRSK).

It belongs to the universal ribosomal protein uL2 family. In terms of assembly, part of the 50S ribosomal subunit.

The protein localises to the plastid. Its subcellular location is the chloroplast. The chain is Large ribosomal subunit protein uL2cz/uL2cy (rpl2-A) from Lobularia maritima (Sweet alyssum).